Consider the following 110-residue polypeptide: uncharacterized protein (110 aa).

Positions 1 to 72 are disordered; the sequence is MWRSSNQRGV…NHRNIHLRNP (72 aa). Residues 10–23 are compositionally biased toward basic residues; sequence VSRRRDKSMRKYTR. Residues 48 to 57 show a composition bias toward polar residues; sequence KNTYTGNISS.

This is an uncharacterized protein from Human herpesvirus 6A (strain Uganda-1102) (HHV-6 variant A).